The following is a 288-amino-acid chain: S-methyl-5'-thioadenosine phosphorylase (288 aa).

Residues serine 12, arginine 54–histidine 55, and serine 87–alanine 88 each bind phosphate. Methionine 186 provides a ligand contact to substrate. Threonine 187 is a phosphate binding site. Aspartate 210 to aspartate 212 contributes to the substrate binding site.

The protein belongs to the PNP/MTAP phosphorylase family. MTAP subfamily. Homohexamer. Dimer of a homotrimer.

The catalysed reaction is S-methyl-5'-thioadenosine + phosphate = 5-(methylsulfanyl)-alpha-D-ribose 1-phosphate + adenine. It participates in amino-acid biosynthesis; L-methionine biosynthesis via salvage pathway; S-methyl-5-thio-alpha-D-ribose 1-phosphate from S-methyl-5'-thioadenosine (phosphorylase route): step 1/1. Its function is as follows. Catalyzes the reversible phosphorylation of S-methyl-5'-thioadenosine (MTA) to adenine and 5-methylthioribose-1-phosphate. Involved in the breakdown of MTA, a major by-product of polyamine biosynthesis. Responsible for the first step in the methionine salvage pathway after MTA has been generated from S-adenosylmethionine. Has broad substrate specificity with 6-aminopurine nucleosides as preferred substrates. This is S-methyl-5'-thioadenosine phosphorylase from Chloroflexus aurantiacus (strain ATCC 29366 / DSM 635 / J-10-fl).